The primary structure comprises 130 residues: Anti-adapter protein IraD (130 aa).

It belongs to the GpW/Gp25 family. IraD subfamily. Interacts with RssB.

It is found in the cytoplasm. In terms of biological role, inhibits RpoS proteolysis by regulating RssB activity, thereby increasing the stability of the sigma stress factor RpoS during oxidative stress. Its effect on RpoS stability is due to its interaction with RssB, which probably blocks the interaction of RssB with RpoS, and the consequent delivery of the RssB-RpoS complex to the ClpXP protein degradation pathway. This Shigella boydii serotype 4 (strain Sb227) protein is Anti-adapter protein IraD.